The primary structure comprises 87 residues: Exodeoxyribonuclease 7 small subunit (87 aa).

The protein belongs to the XseB family. As to quaternary structure, heterooligomer composed of large and small subunits.

It is found in the cytoplasm. It carries out the reaction Exonucleolytic cleavage in either 5'- to 3'- or 3'- to 5'-direction to yield nucleoside 5'-phosphates.. Functionally, bidirectionally degrades single-stranded DNA into large acid-insoluble oligonucleotides, which are then degraded further into small acid-soluble oligonucleotides. This Pelotomaculum thermopropionicum (strain DSM 13744 / JCM 10971 / SI) protein is Exodeoxyribonuclease 7 small subunit.